The sequence spans 777 residues: Zinc finger FYVE domain-containing protein 1 (777 aa).

A required for localization in the lipid droplets region spans residues methionine 416–leucine 777. 2 consecutive FYVE-type zinc fingers follow at residues asparagine 598–asparagine 659 and aspartate 715–glycine 775. Positions 604, 607, 620, 623, 628, 631, 651, 654, 721, 724, 737, 740, 745, 748, 767, and 770 each coordinate Zn(2+).

In terms of assembly, interacts with RAB18 (in GTP-bound form). Interacts with BSCL2 in a RAB18-dependent manner. Interacts with ZW10. (Microbial infection) Interacts with SARS coronavirus-2/SARS-CoV-2 non-structural protein 6 (nsp6); the interaction is independent of PtdIns3P-binding and leads to endoplasmic reticulum (ER) and double membrane vesicles (DMVs) binding to lipid droplets. Highly expressed in heart. Also detected in the testis. As to expression, expressed in all tissues examined, including, brain, placenta, lung, liver, skeletal muscle, pancreas and kidney. Highly expressed in heart.

The protein resides in the golgi apparatus. It is found in the golgi stack. It localises to the endoplasmic reticulum. The protein localises to the lipid droplet. Its subcellular location is the preautophagosomal structure. The protein resides in the mitochondrion. Plays a role in the formation of lipid droplets (LDs) which are storage organelles at the center of lipid and energy homeostasis. Regulates the morphology, size and distribution of LDs. Mediates the formation of endoplasmic reticulum-lipid droplets (ER-LD) contacts by forming a complex with RAB18 and ZW10. Binds to phosphatidylinositol 3-phosphate (PtdIns3P) through FYVE-type zinc finger. In terms of biological role, (Microbial infection) Upon SARS coronavirus-2/SARS-CoV-2 infection, mediates through binding with non-structural protein 6 (nsp6) the replication organelle-lipid droplet association required to sustain viral replication. The chain is Zinc finger FYVE domain-containing protein 1 (ZFYVE1) from Homo sapiens (Human).